A 161-amino-acid polypeptide reads, in one-letter code: Regulator of ribonuclease activity A (161 aa).

It belongs to the RraA family. In terms of assembly, homotrimer. Binds to both RNA-binding sites in the C-terminal region of Rne and to RhlB.

It is found in the cytoplasm. In terms of biological role, globally modulates RNA abundance by binding to RNase E (Rne) and regulating its endonucleolytic activity. Can modulate Rne action in a substrate-dependent manner by altering the composition of the degradosome. Modulates RNA-binding and helicase activities of the degradosome. This chain is Regulator of ribonuclease activity A, found in Sodalis glossinidius (strain morsitans).